The primary structure comprises 304 residues: HPr kinase/phosphorylase (304 aa).

Residues histidine 136 and lysine 157 contribute to the active site. 151–158 (GESGIGKS) serves as a coordination point for ATP. Residue serine 158 coordinates Mg(2+). Aspartate 175 serves as the catalytic Proton acceptor; for phosphorylation activity. Proton donor; for dephosphorylation activity. Residues 198-207 (LEVRGIGIID) form an important for the catalytic mechanism of both phosphorylation and dephosphorylation region. Glutamate 199 contributes to the Mg(2+) binding site. Arginine 240 is a catalytic residue. The tract at residues 261-266 (PVRPGR) is important for the catalytic mechanism of dephosphorylation.

This sequence belongs to the HPrK/P family. As to quaternary structure, homohexamer. The cofactor is Mg(2+).

The enzyme catalyses [HPr protein]-L-serine + ATP = [HPr protein]-O-phospho-L-serine + ADP + H(+). The catalysed reaction is [HPr protein]-O-phospho-L-serine + phosphate + H(+) = [HPr protein]-L-serine + diphosphate. Its function is as follows. Catalyzes the ATP- as well as the pyrophosphate-dependent phosphorylation of a specific serine residue in HPr, a phosphocarrier protein of the phosphoenolpyruvate-dependent sugar phosphotransferase system (PTS). HprK/P also catalyzes the pyrophosphate-producing, inorganic phosphate-dependent dephosphorylation (phosphorolysis) of seryl-phosphorylated HPr (P-Ser-HPr). The two antagonistic activities of HprK/P are regulated by several intracellular metabolites, which change their concentration in response to the absence or presence of rapidly metabolisable carbon sources (glucose, fructose, etc.) in the growth medium. Therefore, by controlling the phosphorylation state of HPr, HPrK/P is a sensor enzyme that plays a major role in the regulation of carbon metabolism and sugar transport: it mediates carbon catabolite repression (CCR), and regulates PTS-catalyzed carbohydrate uptake and inducer exclusion. The protein is HPr kinase/phosphorylase of Clostridium botulinum (strain Eklund 17B / Type B).